The primary structure comprises 577 residues: Proline--tRNA ligase (577 aa).

It belongs to the class-II aminoacyl-tRNA synthetase family. ProS type 1 subfamily. Homodimer.

It localises to the cytoplasm. The catalysed reaction is tRNA(Pro) + L-proline + ATP = L-prolyl-tRNA(Pro) + AMP + diphosphate. Functionally, catalyzes the attachment of proline to tRNA(Pro) in a two-step reaction: proline is first activated by ATP to form Pro-AMP and then transferred to the acceptor end of tRNA(Pro). As ProRS can inadvertently accommodate and process non-cognate amino acids such as alanine and cysteine, to avoid such errors it has two additional distinct editing activities against alanine. One activity is designated as 'pretransfer' editing and involves the tRNA(Pro)-independent hydrolysis of activated Ala-AMP. The other activity is designated 'posttransfer' editing and involves deacylation of mischarged Ala-tRNA(Pro). The misacylated Cys-tRNA(Pro) is not edited by ProRS. The polypeptide is Proline--tRNA ligase (Janthinobacterium sp. (strain Marseille) (Minibacterium massiliensis)).